A 311-amino-acid polypeptide reads, in one-letter code: Homeobox-leucine zipper protein HOX13 (311 aa).

Residues 1–74 (MKRPTSSSRK…PSCGLGEKKR (74 aa)) are disordered. The segment covering 35–54 (DEAEMEEVDEEEEEEVDEDM) has biased composition (acidic residues). The segment at residues 69-128 (LGEKKRRLALEQVRALERSFDTDNKLDPDRKARIARDLGLQPRQVAVWFQNRRARWKTKQ) is a DNA-binding region (homeobox). The tract at residues 127–171 (KQLERDFAALRARHDALRADCDALRRDKDALAAEIRELREKLPTK) is leucine-zipper.

The protein belongs to the HD-ZIP homeobox family. Class I subfamily. In terms of tissue distribution, expressed in seedlings, roots, stems, leaf sheaths and blades and panicles.

The protein localises to the nucleus. Functionally, probable transcription factor. The polypeptide is Homeobox-leucine zipper protein HOX13 (HOX13) (Oryza sativa subsp. japonica (Rice)).